Reading from the N-terminus, the 435-residue chain is Ribulose bisphosphate carboxylase/oxygenase activase 2, chloroplastic (435 aa).

A chloroplast-targeting transit peptide spans 1–56; that stretch reads MAAAYSTVGAVNRAPLSLNGSGARASLVPSTAFFGSSLKKSAAKFPKASSGNFKIV. Position 165 to 172 (165 to 172) interacts with ATP; it reads GGKGQGKS.

Belongs to the RuBisCO activase family.

The protein resides in the plastid. It localises to the chloroplast stroma. Its function is as follows. Activation of RuBisCO (ribulose-1,5-bisphosphate carboxylase/oxygenase; EC 4.1.1.39) involves the ATP-dependent carboxylation of the epsilon-amino group of lysine leading to a carbamate structure. This is Ribulose bisphosphate carboxylase/oxygenase activase 2, chloroplastic (RCA2) from Larrea tridentata (Creosote bush).